The primary structure comprises 79 residues: uncharacterized protein (79 aa).

The span at 22 to 72 (NNNNNNNNNNNNNNNNNNNNNNNNNNNNNNNNNNNNNNNNNNNNNNNNNNN) shows a compositional bias: low complexity. The disordered stretch occupies residues 22-79 (NNNNNNNNNNNNNNNNNNNNNNNNNNNNNNNNNNNNNNNNNNNNNNNNNNNKRFFFFG).

This is an uncharacterized protein from Dictyostelium discoideum (Social amoeba).